We begin with the raw amino-acid sequence, 340 residues long: NADH-quinone oxidoreductase subunit H (340 aa).

The next 8 membrane-spanning stretches (helical) occupy residues 4–24, 78–98, 113–133, 151–171, 184–204, 244–264, 273–293, and 316–336; these read TIGILIWIIIKILVIVVPLLI, YLFVIAPLFALVPSLVGWAVI, VLYLFAMSSLGVYGVLIAGWA, VSYEIAMGFALVGVLLAAGSM, MLHWWFIPLLPLFLVFWISGI, SMILISTVLAILFMGGWLSPF, IFFIVPGFVWLLLKISFFLFV, and VLIPVTIVWLIVTALMVVAHV.

It belongs to the complex I subunit 1 family. NDH-1 is composed of 14 different subunits. Subunits NuoA, H, J, K, L, M, N constitute the membrane sector of the complex.

The protein localises to the cell inner membrane. It carries out the reaction a quinone + NADH + 5 H(+)(in) = a quinol + NAD(+) + 4 H(+)(out). Its function is as follows. NDH-1 shuttles electrons from NADH, via FMN and iron-sulfur (Fe-S) centers, to quinones in the respiratory chain. The immediate electron acceptor for the enzyme in this species is believed to be ubiquinone. Couples the redox reaction to proton translocation (for every two electrons transferred, four hydrogen ions are translocated across the cytoplasmic membrane), and thus conserves the redox energy in a proton gradient. This subunit may bind ubiquinone. This chain is NADH-quinone oxidoreductase subunit H, found in Legionella pneumophila subsp. pneumophila (strain Philadelphia 1 / ATCC 33152 / DSM 7513).